We begin with the raw amino-acid sequence, 271 residues long: Interleukin-1 alpha (271 aa).

The propeptide occupies 1–112 (MAKVPDMFED…DSEEEIIKPR (112 aa)). An N6-acetyllysine modification is found at K82. Positions 82–86 (KKRRL) are nuclear localization signal (NLS). Residue S87 is modified to Phosphoserine. Residues N102 and N141 are each glycosylated (N-linked (GlcNAc...) asparagine).

The protein belongs to the IL-1 family. In terms of assembly, monomer. Interacts with TMED10; the interaction mediates the translocation from the cytoplasm into the ERGIC (endoplasmic reticulum-Golgi intermediate compartment) and thereby secretion. Interacts with IL1R1. Interacts with S100A13; this interaction is the first step in the export of IL1A, followed by direct translocation of this complex across the plasma membrane. In terms of processing, acetylated within its nuclear localization sequence, which impacts subcellular localization. Proteolytic processed by CAPN1 in a calcium-dependent manner. Cleavage from 31 kDa precursor to 18 kDa biologically active molecules. Post-translationally, phosphorylated. Phosphorylation greatly enhances susceptibility to digestion and promotes the conversion of pre-IL1A alpha to the biologically active IL1A.

Its subcellular location is the nucleus. The protein resides in the cytoplasm. The protein localises to the secreted. In terms of biological role, cytokine constitutively present intracellularly in nearly all resting non-hematopoietic cells that plays an important role in inflammation and bridges the innate and adaptive immune systems. After binding to its receptor IL1R1 together with its accessory protein IL1RAP, forms the high affinity interleukin-1 receptor complex. Signaling involves the recruitment of adapter molecules such as MYD88, IRAK1 or IRAK4. In turn, mediates the activation of NF-kappa-B and the three MAPK pathways p38, p42/p44 and JNK pathways. Within the cell, acts as an alarmin and cell death results in its liberation in the extracellular space after disruption of the cell membrane to induce inflammation and alert the host to injury or damage. In addition to its role as a danger signal, which occurs when the cytokine is passively released by cell necrosis, directly senses DNA damage and acts as signal for genotoxic stress without loss of cell integrity. This chain is Interleukin-1 alpha (IL1A), found in Cercocebus atys (Sooty mangabey).